A 571-amino-acid chain; its full sequence is Coenzyme A biosynthesis protein 3 (571 aa).

Disordered regions lie at residues 1–72 (MTDE…YKND) and 100–120 (INTS…PSLP). The span at 8 to 35 (SDQNMNGKQGVNLISSLPTTQVPVSILT) shows a compositional bias: polar residues. Ser42 carries the post-translational modification Phosphoserine. A compositionally biased stretch (basic and acidic residues) spans 43-59 (IHDESNFERSDSHEDQS). Over residues 60–72 (KSNSNRRNIYKND) the composition is skewed to polar residues. 3 positions are modified to phosphoserine: Ser116, Ser121, and Ser124. Disordered regions lie at residues 140–171 (ISNK…LQEQ) and 209–244 (IFKE…SMEK). The span at 146-171 (KQQQQQEQLQQNQQQEEQQKAQLQEQ) shows a compositional bias: low complexity. Ser264 carries the post-translational modification Phosphoserine. The tract at residues 507–571 (RDEETGDKEQ…EDEEDVKTEV (65 aa)) is disordered. Residues 516-571 (QEQEEQEGADNEDDDDEDDEEDEEDEEEEEALNETASDESNDEEDEEDEEDVKTEV) are compositionally biased toward acidic residues.

This sequence belongs to the HFCD (homooligomeric flavin containing Cys decarboxylase) superfamily. As to quaternary structure, component of the phosphopantothenoylcysteine decarboxylase (PPCDC) complex, a heterotrimer composed of CAB3, HAL3 and VHS3.

The protein localises to the cytoplasm. Component of the phosphopantothenoylcysteine decarboxylase (PPCDC) involved in the coenzyme A synthesis. The polypeptide is Coenzyme A biosynthesis protein 3 (CAB3) (Saccharomyces cerevisiae (strain ATCC 204508 / S288c) (Baker's yeast)).